We begin with the raw amino-acid sequence, 638 residues long: 1-deoxy-D-xylulose-5-phosphate synthase (638 aa).

Thiamine diphosphate contacts are provided by residues His78 and Gly119–Ser121. Asp151 is a binding site for Mg(2+). Thiamine diphosphate-binding positions include Gly152–Ala153, Asn180, Tyr289, and Glu371. Asn180 serves as a coordination point for Mg(2+).

The protein belongs to the transketolase family. DXPS subfamily. Homodimer. It depends on Mg(2+) as a cofactor. Thiamine diphosphate is required as a cofactor.

It catalyses the reaction D-glyceraldehyde 3-phosphate + pyruvate + H(+) = 1-deoxy-D-xylulose 5-phosphate + CO2. It functions in the pathway metabolic intermediate biosynthesis; 1-deoxy-D-xylulose 5-phosphate biosynthesis; 1-deoxy-D-xylulose 5-phosphate from D-glyceraldehyde 3-phosphate and pyruvate: step 1/1. In terms of biological role, catalyzes the acyloin condensation reaction between C atoms 2 and 3 of pyruvate and glyceraldehyde 3-phosphate to yield 1-deoxy-D-xylulose-5-phosphate (DXP). In Bartonella bacilliformis (strain ATCC 35685 / KC583 / Herrer 020/F12,63), this protein is 1-deoxy-D-xylulose-5-phosphate synthase.